The sequence spans 563 residues: Coiled-coil domain-containing protein 63 (563 aa).

The segment at 1 to 29 (MSVLKKNRRKDSDTPQEPSEKAKEQQAEA) is disordered. Residues 10-29 (KDSDTPQEPSEKAKEQQAEA) are compositionally biased toward basic and acidic residues. Coiled coils occupy residues 18-201 (PSEK…QLQH), 233-291 (AMKD…AKKH), and 341-422 (TELN…KKIN).

Its function is as follows. Plays a role in spermiogenesis. Involved in the elongation of flagella and the formation of sperm heads. In Homo sapiens (Human), this protein is Coiled-coil domain-containing protein 63.